The chain runs to 348 residues: Dihydroorotase (348 aa).

Zn(2+)-binding residues include histidine 17 and histidine 19. Substrate contacts are provided by residues 19–21 (HLR) and asparagine 45. Lysine 103, histidine 140, and histidine 178 together coordinate Zn(2+). The residue at position 103 (lysine 103) is an N6-carboxylysine. Histidine 140 lines the substrate pocket. Substrate is bound at residue leucine 223. Zn(2+) is bound at residue aspartate 251. Aspartate 251 is an active-site residue. Residues histidine 255 and alanine 267 each contribute to the substrate site.

This sequence belongs to the metallo-dependent hydrolases superfamily. DHOase family. Class II DHOase subfamily. In terms of assembly, homodimer. Zn(2+) is required as a cofactor.

The catalysed reaction is (S)-dihydroorotate + H2O = N-carbamoyl-L-aspartate + H(+). The protein operates within pyrimidine metabolism; UMP biosynthesis via de novo pathway; (S)-dihydroorotate from bicarbonate: step 3/3. In terms of biological role, catalyzes the reversible cyclization of carbamoyl aspartate to dihydroorotate. This Enterobacter sp. (strain 638) protein is Dihydroorotase.